The primary structure comprises 460 residues: Hemopexin (460 aa).

Positions 1–23 (MARTVVALNILVLLGLCWSLAVA) are cleaved as a signal peptide. Residues Asn38 and Asn64 are each glycosylated (N-linked (GlcNAc...) asparagine). 3 disulfides stabilise this stretch: Cys50-Cys230, Cys148-Cys153, and Cys187-Cys199. Hemopexin repeat units lie at residues 53–93 (AWSF…WKNP), 94–138 (VTSV…FPGI), 139–183 (PYPP…SWPA), and 184–230 (VGNC…FISC). His79 lines the heme pocket. His149 contributes to the heme binding site. Residue Asn186 is glycosylated (N-linked (GlcNAc...) asparagine). Heme is bound at residue His235. N-linked (GlcNAc...) asparagine glycosylation is found at Asn240 and Asn246. 3 cysteine pairs are disulfide-bonded: Cys255–Cys458, Cys364–Cys406, and Cys416–Cys433. 4 Hemopexin repeats span residues 257–302 (ADPG…WPQG), 303–350 (PSAV…LGSP), 355–394 (LDTI…WAEL), and 398–448 (HEKV…SLPQ). Heme is bound at residue His291.

It belongs to the hemopexin family. As to expression, expressed by the liver and secreted in plasma.

The protein resides in the secreted. In terms of biological role, binds heme and transports it to the liver for breakdown and iron recovery, after which the free hemopexin returns to the circulation. The protein is Hemopexin (Hpx) of Rattus norvegicus (Rat).